Consider the following 551-residue polypeptide: Intestinal-type alkaline phosphatase 2 (551 aa).

An N-terminal signal peptide occupies residues 1 to 19 (MQGAWVLLLLGFRLQLSLS). Asp-61 is a binding site for Mg(2+). Residues Asp-61 and Ser-111 each coordinate Zn(2+). The active-site Phosphoserine intermediate is the Ser-111. Cys-140 and Cys-202 are oxidised to a cystine. An N-linked (GlcNAc...) asparagine glycan is attached at Asn-141. Ser-174 is a binding site for Mg(2+). Ca(2+) is bound at residue Glu-235. N-linked (GlcNAc...) asparagine glycosylation is present at Asn-241. 3 residues coordinate Ca(2+): Phe-288, Glu-289, and Asp-304. Residue Glu-330 participates in Mg(2+) binding. Residues Asp-335, His-339, Asp-376, and His-377 each coordinate Zn(2+). An N-linked (GlcNAc...) asparagine glycan is attached at Asn-426. Cys-485 and Cys-492 are oxidised to a cystine. A disordered region spans residues 496-537 (PPADENRPTTPVQNSTTTTTTTTTTTTTTTTTRVQNSASSLG). N-linked (GlcNAc...) asparagine glycosylation occurs at Asn-509. The span at 511–527 (TTTTTTTTTTTTTTTTT) shows a compositional bias: low complexity. Over residues 528-537 (RVQNSASSLG) the composition is skewed to polar residues. Residue Asn-531 is the site of GPI-anchor amidated asparagine attachment. The propeptide at 532–551 (SASSLGPATAPLAWHYWPRR) is removed in mature form.

Belongs to the alkaline phosphatase family. In terms of assembly, homodimer. It depends on Mg(2+) as a cofactor. Requires Zn(2+) as cofactor. Ca(2+) serves as cofactor.

It localises to the cell membrane. The enzyme catalyses a phosphate monoester + H2O = an alcohol + phosphate. Functionally, alkaline phosphatase that can hydrolyze various phosphate compounds. This Rattus norvegicus (Rat) protein is Intestinal-type alkaline phosphatase 2.